The sequence spans 325 residues: DNA-directed RNA polymerase subunit alpha (325 aa).

The segment at 1-239 (MQQFLRYNIN…DHLKPLIDIN (239 aa)) is alpha N-terminal domain (alpha-NTD). Positions 255–325 (EKNKKLSIPI…ELYDLKLKNN (71 aa)) are alpha C-terminal domain (alpha-CTD).

This sequence belongs to the RNA polymerase alpha chain family. Homodimer. The RNAP catalytic core consists of 2 alpha, 1 beta, 1 beta' and 1 omega subunit. When a sigma factor is associated with the core the holoenzyme is formed, which can initiate transcription.

It carries out the reaction RNA(n) + a ribonucleoside 5'-triphosphate = RNA(n+1) + diphosphate. Functionally, DNA-dependent RNA polymerase catalyzes the transcription of DNA into RNA using the four ribonucleoside triphosphates as substrates. In Mycoplasmoides gallisepticum (strain R(low / passage 15 / clone 2)) (Mycoplasma gallisepticum), this protein is DNA-directed RNA polymerase subunit alpha.